We begin with the raw amino-acid sequence, 579 residues long: Transcription factor COE2 (579 aa).

Residues R63–N66 form an interaction with DNA region. The segment at C149–C168 adopts a C5-type zinc-finger fold. 2 interaction with DNA regions span residues N195–N202 and N234–K237. Positions P260 to T343 constitute an IPT/TIG domain. Disordered regions lie at residues G442–N482, A514–S533, and L549–M579. Residues G449–N459 are compositionally biased toward polar residues. Low complexity-rich tracts occupy residues S460–S472 and P521–S533.

Belongs to the COE family.

The protein localises to the nucleus. This Danio rerio (Zebrafish) protein is Transcription factor COE2 (coe2).